Reading from the N-terminus, the 220-residue chain is Octanoyltransferase (220 aa).

Residues 29–217 (GRAPEMIWLL…CFEETFGPLP (189 aa)) enclose the BPL/LPL catalytic domain. Substrate contacts are provided by residues 68 to 75 (RGGQYTYH), 148 to 150 (AIG), and 161 to 163 (GLS). The active-site Acyl-thioester intermediate is cysteine 179.

It belongs to the LipB family.

It localises to the cytoplasm. The enzyme catalyses octanoyl-[ACP] + L-lysyl-[protein] = N(6)-octanoyl-L-lysyl-[protein] + holo-[ACP] + H(+). The protein operates within protein modification; protein lipoylation via endogenous pathway; protein N(6)-(lipoyl)lysine from octanoyl-[acyl-carrier-protein]: step 1/2. Functionally, catalyzes the transfer of endogenously produced octanoic acid from octanoyl-acyl-carrier-protein onto the lipoyl domains of lipoate-dependent enzymes. Lipoyl-ACP can also act as a substrate although octanoyl-ACP is likely to be the physiological substrate. The chain is Octanoyltransferase from Dinoroseobacter shibae (strain DSM 16493 / NCIMB 14021 / DFL 12).